A 735-amino-acid chain; its full sequence is Transcription factor sphG (735 aa).

Residues 13-40 constitute a DNA-binding region (zn(2)-C6 fungal-type); it reads CDQCRARKIRCSREKPSCRNCGRLGLQC. The interval 89–110 is disordered; that stretch reads TISPSARCPASPASPSPRLSDK. Low complexity predominate over residues 91–106; it reads SPSARCPASPASPSPR.

Its subcellular location is the nucleus. Transcription factor that regulates the expression of the gene cluster that mediates the biosynthesis of sphingofungins, bioactive molecules acting as sphingolipid inhibitors via inhibiting serine palmitoyl transferase (SPT). This Aspergillus fumigatus (strain CBS 144.89 / FGSC A1163 / CEA10) (Neosartorya fumigata) protein is Transcription factor sphG.